A 312-amino-acid chain; its full sequence is Pimeloyl-[acyl-carrier protein] methyl ester esterase (312 aa).

Residues 17-241 (VYLIHGWGAN…KAAHAPFLSH (225 aa)) form the AB hydrolase-1 domain. Substrate is bound by residues W23, 83–84 (SL), and 145–149 (FLQLQ). The active-site Nucleophile is the S83. Active-site residues include D207 and H235. H235 provides a ligand contact to substrate.

The protein belongs to the AB hydrolase superfamily. Carboxylesterase BioH family. As to quaternary structure, monomer.

It localises to the cytoplasm. It catalyses the reaction 6-carboxyhexanoyl-[ACP] methyl ester + H2O = 6-carboxyhexanoyl-[ACP] + methanol + H(+). The protein operates within cofactor biosynthesis; biotin biosynthesis. The physiological role of BioH is to remove the methyl group introduced by BioC when the pimeloyl moiety is complete. It allows to synthesize pimeloyl-ACP via the fatty acid synthetic pathway through the hydrolysis of the ester bonds of pimeloyl-ACP esters. The protein is Pimeloyl-[acyl-carrier protein] methyl ester esterase of Neisseria meningitidis serogroup A / serotype 4A (strain DSM 15465 / Z2491).